A 160-amino-acid chain; its full sequence is Ureidoglycolate lyase (160 aa).

The protein belongs to the ureidoglycolate lyase family. As to quaternary structure, homodimer. It depends on Ni(2+) as a cofactor.

The catalysed reaction is (S)-ureidoglycolate = urea + glyoxylate. It participates in nitrogen metabolism; (S)-allantoin degradation. Its function is as follows. Catalyzes the catabolism of the allantoin degradation intermediate (S)-ureidoglycolate, generating urea and glyoxylate. Involved in the anaerobic utilization of allantoin as sole nitrogen source. Reinforces the induction of genes involved in the degradation of allantoin and glyoxylate by producing glyoxylate. The polypeptide is Ureidoglycolate lyase (Shigella flexneri serotype 5b (strain 8401)).